A 285-amino-acid chain; its full sequence is N(G),N(G)-dimethylarginine dimethylaminohydrolase 1 (285 aa).

N-acetylalanine is present on alanine 2. Substrate contacts are provided by residues leucine 30, aspartate 73, 78-79, arginine 98, and arginine 145; that span reads ED. Histidine 173 serves as the catalytic Proton donor. Residue cysteine 222 is modified to S-nitrosocysteine. Valine 268 is a binding site for substrate. An S-nitrosocysteine modification is found at cysteine 274. Residue cysteine 274 is the Nucleophile of the active site. Zn(2+) is bound at residue cysteine 274.

Belongs to the DDAH family. Monomer. In terms of tissue distribution, detected in brain, liver, kidney and pancreas, and at low levels in skeletal muscle.

The catalysed reaction is N(omega),N(omega)-dimethyl-L-arginine + H2O = dimethylamine + L-citrulline. It catalyses the reaction N(omega)-methyl-L-arginine + H2O = L-citrulline + methylamine. Its activity is regulated as follows. Inhibited by zinc ions. Enzyme purified in the absence of 1,10-phenanthroline contains on average 0.4 zinc atoms per subunit. Inhibited by 4-hydroxy-nonenal through the formation of a covalent adduct with His-173. Competitively inhibited by N(5)-iminopropyl-ornithine. In terms of biological role, hydrolyzes N(G),N(G)-dimethyl-L-arginine (ADMA) and N(G)-monomethyl-L-arginine (MMA) which act as inhibitors of NOS. Has therefore a role in the regulation of nitric oxide generation. The protein is N(G),N(G)-dimethylarginine dimethylaminohydrolase 1 of Homo sapiens (Human).